The chain runs to 214 residues: Phosphatidylserine decarboxylase proenzyme (214 aa).

Residue Ser-183 is the Schiff-base intermediate with substrate; via pyruvic acid of the active site. Ser-183 bears the Pyruvic acid (Ser); by autocatalysis mark.

It belongs to the phosphatidylserine decarboxylase family. PSD-A subfamily. In terms of assembly, heterodimer of a large membrane-associated beta subunit and a small pyruvoyl-containing alpha subunit. The cofactor is pyruvate. Is synthesized initially as an inactive proenzyme. Formation of the active enzyme involves a self-maturation process in which the active site pyruvoyl group is generated from an internal serine residue via an autocatalytic post-translational modification. Two non-identical subunits are generated from the proenzyme in this reaction, and the pyruvate is formed at the N-terminus of the alpha chain, which is derived from the carboxyl end of the proenzyme. The post-translation cleavage follows an unusual pathway, termed non-hydrolytic serinolysis, in which the side chain hydroxyl group of the serine supplies its oxygen atom to form the C-terminus of the beta chain, while the remainder of the serine residue undergoes an oxidative deamination to produce ammonia and the pyruvoyl prosthetic group on the alpha chain.

The protein localises to the cell membrane. The catalysed reaction is a 1,2-diacyl-sn-glycero-3-phospho-L-serine + H(+) = a 1,2-diacyl-sn-glycero-3-phosphoethanolamine + CO2. It participates in phospholipid metabolism; phosphatidylethanolamine biosynthesis; phosphatidylethanolamine from CDP-diacylglycerol: step 2/2. Catalyzes the formation of phosphatidylethanolamine (PtdEtn) from phosphatidylserine (PtdSer). This Syntrophotalea carbinolica (strain DSM 2380 / NBRC 103641 / GraBd1) (Pelobacter carbinolicus) protein is Phosphatidylserine decarboxylase proenzyme.